A 93-amino-acid chain; its full sequence is Alpha-defensin 10 (93 aa).

Residues 1 to 19 form the signal peptide; the sequence is MKTLVLLSALVLLAFQVQA. The propeptide occupies 20 to 58; that stretch reads DPIQNTDEETKTEEQPGEDDQAVSVSFGDPEGSSLQEES. The disordered stretch occupies residues 22-56; the sequence is IQNTDEETKTEEQPGEDDQAVSVSFGDPEGSSLQE. 3 cysteine pairs are disulfide-bonded: Cys-64–Cys-92, Cys-66–Cys-81, and Cys-71–Cys-91.

This sequence belongs to the alpha-defensin family. As to expression, paneth cells of the small bowel.

Its subcellular location is the secreted. Its function is as follows. Probably contributes to the antimicrobial barrier function of the small bowel mucosa. This Mus musculus (Mouse) protein is Alpha-defensin 10 (Defa10).